The chain runs to 389 residues: Equilibrative nucleotide transporter 8 (389 aa).

A run of 10 helical transmembrane segments spans residues 19–39 (VAYV…NALI), 57–77 (TFTV…MTWN), 87–107 (NLGF…DWVW), 119–139 (LMVG…GSLI), 150–170 (MQAI…LRIA), 187–207 (HSYF…CNVL), 238–258 (WPAS…PGFI), 266–286 (LLQS…DFVG), 331–351 (VVVL…VLMI), and 367–387 (IFMV…GWLW).

This sequence belongs to the SLC29A/ENT transporter (TC 2.A.57) family. In terms of tissue distribution, expressed in stems, flowers and siliques.

Its subcellular location is the cell membrane. In terms of biological role, may be involved in nucleoside transport. This chain is Equilibrative nucleotide transporter 8 (ETN8), found in Arabidopsis thaliana (Mouse-ear cress).